A 1220-amino-acid chain; its full sequence is DNA-directed RNA polymerase subunit beta' (1220 aa).

Zn(2+) contacts are provided by C61, C63, C76, and C79. Residues D450, D452, and D454 each coordinate Mg(2+). The tract at residues 1197–1220 is disordered; the sequence is QPEVEQEPTPDIPKLDDVAKSFEE. The segment covering 1209–1220 has biased composition (basic and acidic residues); it reads PKLDDVAKSFEE.

This sequence belongs to the RNA polymerase beta' chain family. The RNAP catalytic core consists of 2 alpha, 1 beta, 1 beta' and 1 omega subunit. When a sigma factor is associated with the core the holoenzyme is formed, which can initiate transcription. Requires Mg(2+) as cofactor. Zn(2+) serves as cofactor.

It catalyses the reaction RNA(n) + a ribonucleoside 5'-triphosphate = RNA(n+1) + diphosphate. Functionally, DNA-dependent RNA polymerase catalyzes the transcription of DNA into RNA using the four ribonucleoside triphosphates as substrates. This Leuconostoc citreum (strain KM20) protein is DNA-directed RNA polymerase subunit beta'.